The sequence spans 625 residues: 1-deoxy-D-xylulose-5-phosphate synthase (625 aa).

Thiamine diphosphate contacts are provided by residues histidine 80 and 121 to 123 (GHS). Aspartate 152 serves as a coordination point for Mg(2+). Thiamine diphosphate is bound by residues 153–154 (GS), asparagine 181, tyrosine 290, and glutamate 371. Asparagine 181 provides a ligand contact to Mg(2+).

This sequence belongs to the transketolase family. DXPS subfamily. In terms of assembly, homodimer. Mg(2+) serves as cofactor. Requires thiamine diphosphate as cofactor.

It carries out the reaction D-glyceraldehyde 3-phosphate + pyruvate + H(+) = 1-deoxy-D-xylulose 5-phosphate + CO2. It participates in metabolic intermediate biosynthesis; 1-deoxy-D-xylulose 5-phosphate biosynthesis; 1-deoxy-D-xylulose 5-phosphate from D-glyceraldehyde 3-phosphate and pyruvate: step 1/1. Its function is as follows. Catalyzes the acyloin condensation reaction between C atoms 2 and 3 of pyruvate and glyceraldehyde 3-phosphate to yield 1-deoxy-D-xylulose-5-phosphate (DXP). The sequence is that of 1-deoxy-D-xylulose-5-phosphate synthase from Haemophilus influenzae (strain PittGG).